We begin with the raw amino-acid sequence, 235 residues long: CD-NTase-associated protein 13 (235 aa).

2 consecutive transmembrane segments (helical) span residues 14–34 and 45–65; these read IVHH…LIWI and IIFT…IVGL.

The protein in the C-terminal section; belongs to the bacterial STING family. In terms of assembly, homodimer.

Its subcellular location is the cell inner membrane. Its function is as follows. Effector protein of a CBASS antivirus system. CBASS (cyclic oligonucleotide-based antiphage signaling system) provides immunity against bacteriophage. The CD-NTase protein synthesizes cyclic nucleotides in response to infection; these serve as specific second messenger signals. The signals activate a diverse range of effectors, leading to bacterial cell death and thus abortive phage infection. A type I-D(GG) CBASS system. Binds cyclic dinucleotides: binds c-di-GMP (synthesized by the cognate CdnE encoded upstream in the same operon), cyclic 3'3'-cyclic GMP-AMP (3'3'-cGAMP) but not cUMP-AMP. The effector protein for this CBASS system, its activity is stimulated by c-di-GMP and leads to cell death. The protein is CD-NTase-associated protein 13 of Flavobacteriaceae sp. genome_bin_11.